The primary structure comprises 597 residues: Elongation factor 4 (597 aa).

The tr-type G domain maps to 2–184; that stretch reads KNIRNFSIIA…EIVAKIPAPA (183 aa). GTP contacts are provided by residues 14 to 19 and 131 to 134; these read DHGKST and NKID.

It belongs to the TRAFAC class translation factor GTPase superfamily. Classic translation factor GTPase family. LepA subfamily.

It is found in the cell inner membrane. The catalysed reaction is GTP + H2O = GDP + phosphate + H(+). In terms of biological role, required for accurate and efficient protein synthesis under certain stress conditions. May act as a fidelity factor of the translation reaction, by catalyzing a one-codon backward translocation of tRNAs on improperly translocated ribosomes. Back-translocation proceeds from a post-translocation (POST) complex to a pre-translocation (PRE) complex, thus giving elongation factor G a second chance to translocate the tRNAs correctly. Binds to ribosomes in a GTP-dependent manner. This is Elongation factor 4 from Neisseria meningitidis serogroup A / serotype 4A (strain DSM 15465 / Z2491).